Reading from the N-terminus, the 195-residue chain is GTP cyclohydrolase 1 (195 aa).

Residues Cys85, His88, and Cys157 each contribute to the Zn(2+) site.

Belongs to the GTP cyclohydrolase I family. In terms of assembly, toroid-shaped homodecamer, composed of two pentamers of five dimers.

It catalyses the reaction GTP + H2O = 7,8-dihydroneopterin 3'-triphosphate + formate + H(+). It participates in cofactor biosynthesis; 7,8-dihydroneopterin triphosphate biosynthesis; 7,8-dihydroneopterin triphosphate from GTP: step 1/1. This is GTP cyclohydrolase 1 from Clostridium acetobutylicum (strain ATCC 824 / DSM 792 / JCM 1419 / IAM 19013 / LMG 5710 / NBRC 13948 / NRRL B-527 / VKM B-1787 / 2291 / W).